We begin with the raw amino-acid sequence, 310 residues long: Olfactory receptor 5P80 (310 aa).

Residues 1–25 (MEPGNYTVVTEVILLGFTEDAIIRA) are Extracellular-facing. A glycan (N-linked (GlcNAc...) asparagine) is linked at Asn5. Residues 26–46 (ILFIVFLIIYSVTLMGNASII) form a helical membrane-spanning segment. Residues 47–54 (MLIRRSPQ) are Cytoplasmic-facing. A helical membrane pass occupies residues 55 to 75 (LHTPMYLLLSHLAFVDIGYSS). The Extracellular portion of the chain corresponds to 76–99 (SVTPIMLKGFLRKETFILVSGCVA). Cys97 and Cys189 are joined by a disulfide. The chain crosses the membrane as a helical span at residues 100-120 (QLCSVVTFGSTECFLLAAMAY). The Cytoplasmic portion of the chain corresponds to 121 to 133 (DRYVAICSPLLYA). A helical membrane pass occupies residues 134–154 (TQMSSTVCILLVGASYLGGCV). Over 155–196 (NAWTFTGCLLNLSFCRPNKVNHFFCDYSPLLKISCSHDFSSE) the chain is Extracellular. A glycan (N-linked (GlcNAc...) asparagine) is linked at Asn165. Residues 197-217 (VIPAISSGSIIVVTVFIIALS) traverse the membrane as a helical segment. Residues 218–237 (YVYILVSILKMRSTEGRQKA) are Cytoplasmic-facing. The helical transmembrane segment at 238 to 258 (FSTCTSHLTAVTLFYGTITFI) threads the bilayer. Over 259–271 (YVMPKSSYSTDQN) the chain is Extracellular. A helical membrane pass occupies residues 272-292 (KVVSVFYTVVIPMLNPIIYSL). The Cytoplasmic portion of the chain corresponds to 293–310 (RNKDVKEAMKKLMANTHH).

Belongs to the G-protein coupled receptor 1 family.

The protein resides in the cell membrane. Its function is as follows. Potential odorant receptor. This chain is Olfactory receptor 5P80, found in Mus musculus (Mouse).